The following is a 139-amino-acid chain: ATP synthase epsilon chain (139 aa).

This sequence belongs to the ATPase epsilon chain family. In terms of assembly, F-type ATPases have 2 components, CF(1) - the catalytic core - and CF(0) - the membrane proton channel. CF(1) has five subunits: alpha(3), beta(3), gamma(1), delta(1), epsilon(1). CF(0) has three main subunits: a, b and c.

It localises to the cell inner membrane. In terms of biological role, produces ATP from ADP in the presence of a proton gradient across the membrane. In Acinetobacter baumannii (strain SDF), this protein is ATP synthase epsilon chain.